The chain runs to 302 residues: Glutaminase (302 aa).

Ser61, Asn111, Glu155, Asn162, Tyr186, Tyr238, and Val256 together coordinate substrate.

The protein belongs to the glutaminase family. In terms of assembly, homotetramer.

The enzyme catalyses L-glutamine + H2O = L-glutamate + NH4(+). This chain is Glutaminase, found in Pseudomonas paraeruginosa (strain DSM 24068 / PA7) (Pseudomonas aeruginosa (strain PA7)).